A 583-amino-acid chain; its full sequence is MASTSTEVFPFKDQELSTQLLFQLNILRQEQIFTDVILCTEDKEIPCHRNVLVSSSPYFRAMFCSNFRESSQARVDLKGIASEVIECVVDYIYTGSITITMELVLPLMQAASMLQYGRLFEACSTFLQEQLNPENCLSMIRLSEILHCETLKERAKEMAVRCFSDVAASEDFCELTLPELMCYLEDDRLCAEEEQVFETLLAWIHHDPFSRRGAIHDLFKKVRLRFIHPTYLFQFIANDPLVQSSTLCTEIIESVRRLMFSVSAKCTKELKPLWTTPRRYTCRETLVVVGGRKNNEQTSREALLYDERTQRWQWLAKLPLRLYKAAYVCIHSILYVVGGLSLSLVSGDSAVSATVYTLSLKTNQWRTAEPMLEPRYAHQCVSYLHFIFALGGIGQDKQISNTVERYNSMFNQWEVMAPMPTAVLHPAVAANDQRIYVFGGEDALQNPVRLIQVYHISRNLWSRLETRTVKNVCAPAAVIEDKIYIVGGYTRRVIAYDTKANKFVKCTNMKERRMHHAATVINNKLYVTGGRFLNSHDVIEDSDCFECYDPKTDVWTSKGSLPYKLFDHGSLPLICVSNRPNPP.

The BTB domain maps to 34 to 101 (TDVILCTEDK…IYTGSITITM (68 aa)). The 102-residue stretch at 136 to 237 (CLSMIRLSEI…HPTYLFQFIA (102 aa)) folds into the BACK domain. 6 Kelch repeats span residues 285 to 332 (TLVV…CIHS), 333 to 385 (ILYV…SYLH), 386 to 433 (FIFA…ANDQ), 435 to 481 (IYVF…VIED), 482 to 523 (KIYI…VINN), and 525 to 575 (LYVT…PLIC).

This Danio rerio (Zebrafish) protein is Kelch-like protein 38 (klhl38).